A 739-amino-acid chain; its full sequence is Protein NPGR2 (739 aa).

The disordered stretch occupies residues Glu-32 to Asn-71. The span at Gln-33–Glu-45 shows a compositional bias: basic and acidic residues. Residues Asn-53–Ser-63 are compositionally biased toward polar residues. TPR repeat units follow at residues Glu-90–Thr-127, Phe-162–Ser-195, Thr-215–Leu-248, Pro-465–Ser-498, Leu-500–Trp-533, Gly-536–Gln-569, Leu-592–Ser-625, Ser-626–His-659, and His-697–Met-733.

Interacts with calmodulin in a calcium-dependent manner. As to expression, expressed in pollen, flowers and fruits.

This is Protein NPGR2 from Arabidopsis thaliana (Mouse-ear cress).